The following is a 289-amino-acid chain: Probable ABC transporter permease protein BRA0749/BS1330_II0742 (289 aa).

6 helical membrane-spanning segments follow: residues 9-29 (FLILPSLLLAAVVIFWPVVHL), 70-90 (VWTVAVVGGALVLSIPVAIIL), 99-119 (VARVIIMLPWAVSLTMTAIVW), 144-166 (IQWLASAATAFPMQILVGILVTV), 213-233 (IAIVLNTIYVFNSFPIIWVMT), and 260-280 (EASAVSLIMLAILLVFTVIYI). The ABC transmembrane type-1 domain maps to 65 to 279 (LWRTAVWTVA…AILLVFTVIY (215 aa)).

Belongs to the binding-protein-dependent transport system permease family. In terms of assembly, the complex is composed of two ATP-binding proteins (BRA0745), two transmembrane proteins (BRA0749) and a solute-binding protein (BRA0748).

The protein localises to the cell inner membrane. Its function is as follows. Probably part of an ABC transporter complex. Probably responsible for the translocation of the substrate across the membrane. The polypeptide is Probable ABC transporter permease protein BRA0749/BS1330_II0742 (Brucella suis biovar 1 (strain 1330)).